The sequence spans 429 residues: CinA-like protein (429 aa).

This sequence belongs to the CinA family.

The sequence is that of CinA-like protein from Prochlorococcus marinus (strain MIT 9313).